The chain runs to 365 residues: Heat-inducible transcription repressor HrcA (365 aa).

It belongs to the HrcA family.

Its function is as follows. Negative regulator of class I heat shock genes (grpE-dnaK-dnaJ and groELS operons). Prevents heat-shock induction of these operons. The sequence is that of Heat-inducible transcription repressor HrcA from Trichormus variabilis (strain ATCC 29413 / PCC 7937) (Anabaena variabilis).